The primary structure comprises 1940 residues: Myosin-3 (1940 aa).

The Myosin N-terminal SH3-like domain maps to 33 to 82 (DAKTYCFVVDSKEEYAKGKIKSSQDGKVTVETEDNRTLVVKPEDVYAMNP). The 694-residue stretch at 86 to 779 (DRIEDMAMLT…LLGTLEEMRD (694 aa)) folds into the Myosin motor domain. An N6,N6,N6-trimethyllysine modification is found at lysine 130. ATP is bound at residue 179 to 186 (GESGAGKT). Actin-binding regions lie at residues 656–678 (LNKL…IPNE) and 758–772 (KFGH…GLLG). Residues 782–811 (LAKLITRTQAVCRGFLMRVEFQKMVQRRES) form the IQ domain. Positions 840–1933 (LLKSAETEKE…KTRDFTSSRM (1094 aa)) form a coiled coil.

The protein belongs to the TRAFAC class myosin-kinesin ATPase superfamily. Myosin family. As to quaternary structure, muscle myosin is a hexameric protein that consists of 2 heavy chain subunits (MHC), 2 alkali light chain subunits (MLC) and 2 regulatory light chain subunits (MLC-2). In terms of tissue distribution, expressed in fetal bone, thymus, placenta, heart, brain, and liver.

It is found in the cytoplasm. It localises to the myofibril. Its function is as follows. Muscle contraction. This is Myosin-3 (MYH3) from Homo sapiens (Human).